The following is a 668-amino-acid chain: Probable metal-nicotianamine transporter YSL5 (668 aa).

Positions 1–11 (MPPPETSSAAA) are enriched in low complexity. Positions 1–22 (MPPPETSSAAAPSPPSPDPLPP) are disordered. A compositionally biased stretch (pro residues) spans 12 to 22 (PSPPSPDPLPP). A run of 14 helical transmembrane segments spans residues 27–47 (LTLRGVAVAAVLGSLLCVVIH), 51–71 (LTVGVIPALNVASGLLAFFLA), 102–122 (CAIACGSLAFSGCSSSYIFAM), 147–167 (LGWMIGFMFLIALIGPFSIVM), 209–229 (LVKYMSLSFGWSFFKWFFSGV), 268–288 (IVNCSVFLGSVISWGFLWPFI), 315–335 (IAISVILGDGLYNLVKVFLII), 383–403 (LAVSGYIVLAAISTVAVPIIF), 410–430 (LVLVCYFLAPAIAFCNSYGMG), 443–463 (IALFVFASLVGSDGGVIAGLA), 501–521 (IGVALGCIIAPLTLWLFWTAF), 557–577 (LEICCVFFLAALIINLMKDVV), 595–615 (FYIGAYFGVDMFIGTLILFAW), and 633–653 (GLICGDGVWSIPSAVLSILGV).

The protein belongs to the YSL (TC 2.A.67.2) family. Expressed in roots.

The protein localises to the membrane. In terms of biological role, may be involved in the transport of nicotianamine-chelated metals. In Oryza sativa subsp. japonica (Rice), this protein is Probable metal-nicotianamine transporter YSL5 (YSL5).